The following is a 284-amino-acid chain: MLIIETLPLLRQHIRRLRQEGKRVALVPTMGNLHDGHMKLVDEAKARADVVIVSIFVNPMQFDRPDDLVRYPRTLQEDCEKLNKRKVDYVFAPAVEEIYPQGLEGQTYVDVPGLSTMLEGTSRPGHFRGVSTIVSKLFNLIQPDIACFGEKDFQQLALIRKMVADMGYDIEIVGVPIIRAKDGLALSSRNAYLTAEQRKIAPGLYNVMNSIAEKLIAGNRELQEIIAIAEQELNEKGFRADDIQIRDADTLLELTETSKRAVILAAAWLGQARLIDNQSVTLAQ.

30 to 37 (MGNLHDGH) lines the ATP pocket. The Proton donor role is filled by histidine 37. (R)-pantoate is bound at residue glutamine 61. Glutamine 61 contacts beta-alanine. 149–152 (GEKD) is a binding site for ATP. Glutamine 155 provides a ligand contact to (R)-pantoate. ATP-binding positions include isoleucine 178 and 186-189 (LSSR).

Belongs to the pantothenate synthetase family. As to quaternary structure, homodimer.

The protein localises to the cytoplasm. The catalysed reaction is (R)-pantoate + beta-alanine + ATP = (R)-pantothenate + AMP + diphosphate + H(+). It participates in cofactor biosynthesis; (R)-pantothenate biosynthesis; (R)-pantothenate from (R)-pantoate and beta-alanine: step 1/1. Catalyzes the condensation of pantoate with beta-alanine in an ATP-dependent reaction via a pantoyl-adenylate intermediate. The chain is Pantothenate synthetase from Salmonella typhi.